A 76-amino-acid polypeptide reads, in one-letter code: Sea anemone sodium channel inhibitor type I (76 aa).

The signal sequence occupies residues 1-19; that stretch reads MNRMLIIFVVVTVFGLASG. Residues 20 to 30 constitute a propeptide that is removed on maturation; it reads LGPNMPAPDLA. 3 cysteine pairs are disulfide-bonded: cysteine 37–cysteine 72, cysteine 39–cysteine 60, and cysteine 53–cysteine 73.

Belongs to the sea anemone sodium channel inhibitory toxin family. Type I subfamily. As to expression, expressed in acontia, a specialised envenomation structure laden with batteries of venom-containing nematocysts found only in the superfamily Metridioidea.

It localises to the secreted. The protein localises to the nematocyst. May affect sodium channels (Nav). This is Sea anemone sodium channel inhibitor type I from Calliactis polypus (Hermit crab anemone).